The primary structure comprises 87 residues: Small ribosomal subunit protein bS20 (87 aa).

It belongs to the bacterial ribosomal protein bS20 family.

Its function is as follows. Binds directly to 16S ribosomal RNA. The polypeptide is Small ribosomal subunit protein bS20 (Beijerinckia indica subsp. indica (strain ATCC 9039 / DSM 1715 / NCIMB 8712)).